The following is a 75-amino-acid chain: Cytochrome c oxidase subunit 6C (75 aa).

Residues 1-13 are Mitochondrial matrix-facing; sequence MAPEVLPKPQMRG. The helical transmembrane segment at 14–54 threads the bilayer; it reads LLARRLRFHMVTGFVLSLGVAALYKVGVADKRKKAYADFYR. At 55–75 the chain is on the mitochondrial intermembrane side; the sequence is NYDAMKDFEEMRKAGIFQSVK.

It belongs to the cytochrome c oxidase subunit 6c family. As to quaternary structure, component of the cytochrome c oxidase (complex IV, CIV), a multisubunit enzyme composed of 14 subunits. The complex is composed of a catalytic core of 3 subunits MT-CO1, MT-CO2 and MT-CO3, encoded in the mitochondrial DNA, and 11 supernumerary subunits COX4I, COX5A, COX5B, COX6A, COX6B, COX6C, COX7A, COX7B, COX7C, COX8 and NDUFA4, which are encoded in the nuclear genome. The complex exists as a monomer or a dimer and forms supercomplexes (SCs) in the inner mitochondrial membrane with NADH-ubiquinone oxidoreductase (complex I, CI) and ubiquinol-cytochrome c oxidoreductase (cytochrome b-c1 complex, complex III, CIII), resulting in different assemblies (supercomplex SCI(1)III(2)IV(1) and megacomplex MCI(2)III(2)IV(2)).

The protein localises to the mitochondrion inner membrane. The protein operates within energy metabolism; oxidative phosphorylation. Component of the cytochrome c oxidase, the last enzyme in the mitochondrial electron transport chain which drives oxidative phosphorylation. The respiratory chain contains 3 multisubunit complexes succinate dehydrogenase (complex II, CII), ubiquinol-cytochrome c oxidoreductase (cytochrome b-c1 complex, complex III, CIII) and cytochrome c oxidase (complex IV, CIV), that cooperate to transfer electrons derived from NADH and succinate to molecular oxygen, creating an electrochemical gradient over the inner membrane that drives transmembrane transport and the ATP synthase. Cytochrome c oxidase is the component of the respiratory chain that catalyzes the reduction of oxygen to water. Electrons originating from reduced cytochrome c in the intermembrane space (IMS) are transferred via the dinuclear copper A center (CU(A)) of subunit 2 and heme A of subunit 1 to the active site in subunit 1, a binuclear center (BNC) formed by heme A3 and copper B (CU(B)). The BNC reduces molecular oxygen to 2 water molecules using 4 electrons from cytochrome c in the IMS and 4 protons from the mitochondrial matrix. In Macaca silenus (Lion-tailed macaque), this protein is Cytochrome c oxidase subunit 6C (COX6C).